The following is a 1155-amino-acid chain: ATP-dependent helicase/deoxyribonuclease subunit B (1155 aa).

The 300-residue stretch at 1–300 folds into the UvrD-like helicase ATP-binding domain; that stretch reads MSLRFIVGRA…AHLEKYYFRH (300 aa). 8–15 is a binding site for ATP; the sequence is GRAGSGKS. The region spanning 280–590 is the UvrD-like helicase C-terminal domain; that stretch reads TPVRFQKDSA…VVGTLERSRN (311 aa). Positions 792, 1111, 1114, and 1120 each coordinate [4Fe-4S] cluster.

This sequence belongs to the helicase family. AddB/RexB type 1 subfamily. Heterodimer of AddA and AddB. Mg(2+) serves as cofactor. [4Fe-4S] cluster is required as a cofactor.

Functionally, the heterodimer acts as both an ATP-dependent DNA helicase and an ATP-dependent, dual-direction single-stranded exonuclease. Recognizes the chi site generating a DNA molecule suitable for the initiation of homologous recombination. The AddB subunit has 5' -&gt; 3' nuclease activity but not helicase activity. This is ATP-dependent helicase/deoxyribonuclease subunit B from Desulforamulus reducens (strain ATCC BAA-1160 / DSM 100696 / MI-1) (Desulfotomaculum reducens).